A 207-amino-acid polypeptide reads, in one-letter code: LexA repressor (207 aa).

Residues 28-48 (VREIGEAVGLASSSTVHGHLA) constitute a DNA-binding region (H-T-H motif). Catalysis depends on for autocatalytic cleavage activity residues Ser-129 and Lys-167.

The protein belongs to the peptidase S24 family. Homodimer.

The enzyme catalyses Hydrolysis of Ala-|-Gly bond in repressor LexA.. Functionally, represses a number of genes involved in the response to DNA damage (SOS response), including recA and lexA. In the presence of single-stranded DNA, RecA interacts with LexA causing an autocatalytic cleavage which disrupts the DNA-binding part of LexA, leading to derepression of the SOS regulon and eventually DNA repair. This chain is LexA repressor, found in Brevibacillus brevis (strain 47 / JCM 6285 / NBRC 100599).